We begin with the raw amino-acid sequence, 265 residues long: Photosystem II 22 kDa protein, chloroplastic (265 aa).

The N-terminal 59 residues, 1 to 59 (MAQTMLLTSGVTAGHFLRNKSPLAQPKVHHLFLSGNSPVALPSRRQSFVPLALFKPKTK), are a transit peptide targeting the chloroplast. 2 repeat units span residues 54-158 (FKPK…FVDD) and 159-264 (PPTG…DGEE). Transmembrane regions (helical) follow at residues 96-116 (VAMI…KGIL), 130-150 (AEPL…GALG), 195-215 (LFVG…EIIT), and 229-249 (IPIQ…FFAA).

Belongs to the ELIP/psbS family.

It is found in the plastid. It localises to the chloroplast thylakoid membrane. Its function is as follows. Plays an important role in non-photochemical quenching (NPQ), a process maintains the balance between dissipation and utilization of light energy to minimize generation of oxidizing molecules, thereby protecting the plant against photo-oxidative damage; acts upstream of DLDG1. Is not necessary for efficient light harvesting and photosynthesis. The chain is Photosystem II 22 kDa protein, chloroplastic from Arabidopsis thaliana (Mouse-ear cress).